The primary structure comprises 102 residues: Small ribosomal subunit protein uS10 (102 aa).

It belongs to the universal ribosomal protein uS10 family. Part of the 30S ribosomal subunit.

Functionally, involved in the binding of tRNA to the ribosomes. This chain is Small ribosomal subunit protein uS10, found in Ligilactobacillus salivarius (strain UCC118) (Lactobacillus salivarius).